The following is a 397-amino-acid chain: DNA replication and repair protein RecF (397 aa).

30 to 37 contacts ATP; that stretch reads GPNGQGKT.

It belongs to the RecF family.

It is found in the cytoplasm. Functionally, the RecF protein is involved in DNA metabolism; it is required for DNA replication and normal SOS inducibility. RecF binds preferentially to single-stranded, linear DNA. It also seems to bind ATP. The chain is DNA replication and repair protein RecF from Beutenbergia cavernae (strain ATCC BAA-8 / DSM 12333 / CCUG 43141 / JCM 11478 / NBRC 16432 / NCIMB 13614 / HKI 0122).